A 76-amino-acid polypeptide reads, in one-letter code: Translational regulator CsrA (76 aa).

This sequence belongs to the CsrA/RsmA family. As to quaternary structure, homodimer; the beta-strands of each monomer intercalate to form a hydrophobic core, while the alpha-helices form wings that extend away from the core.

It localises to the cytoplasm. A translational regulator that binds mRNA to regulate translation initiation and/or mRNA stability. Usually binds in the 5'-UTR at or near the Shine-Dalgarno sequence preventing ribosome-binding, thus repressing translation. Its main target seems to be the major flagellin gene, while its function is anatagonized by FliW. The polypeptide is Translational regulator CsrA (Syntrophomonas wolfei subsp. wolfei (strain DSM 2245B / Goettingen)).